A 313-amino-acid chain; its full sequence is Glyoxylate/hydroxypyruvate reductase A (313 aa).

Arg-228 is a catalytic residue. His-276 functions as the Proton donor in the catalytic mechanism.

It belongs to the D-isomer specific 2-hydroxyacid dehydrogenase family. GhrA subfamily.

The protein localises to the cytoplasm. The catalysed reaction is glycolate + NADP(+) = glyoxylate + NADPH + H(+). It carries out the reaction (R)-glycerate + NAD(+) = 3-hydroxypyruvate + NADH + H(+). It catalyses the reaction (R)-glycerate + NADP(+) = 3-hydroxypyruvate + NADPH + H(+). Functionally, catalyzes the NADPH-dependent reduction of glyoxylate and hydroxypyruvate into glycolate and glycerate, respectively. The sequence is that of Glyoxylate/hydroxypyruvate reductase A from Yersinia enterocolitica serotype O:8 / biotype 1B (strain NCTC 13174 / 8081).